Reading from the N-terminus, the 621-residue chain is MSSHSKQALPAITVAAIGVVFGDIGTSPLYALKEIFNGHHPIPVTPENILGVLSLVFWAIIVLVTIKYVAIIMRADNRGEGGSLALLALVTERAKNPRLSWIITLLGIFAAALFYGDSMITPAISVLSAVEGLEIITPDLKSYVIPITLGILTGLFFIQKHGTGAVGKLFGPVMVAWFGILAILGLKEIAYNPAVLLALNPLFAIVFVAEHTGLAFLALGSVVLAVTGGEALYTDMGHFGRFPIRLAWFGFVMPALVLNYFGQGALLLIEPEAIASPFFHLAPDWALIPMVGLATAATVIASQAVISGAFSVARQSIQMGLLPRMQIIHTSGMEEGQIYVPFTNWSLYLAVIALVIGFKNSSNLAAAYGIAVTGTMLIDTILVAFVMVLMWKWNKLLVALVAGTLLLVDIAFFAANAIKIPEGGWFPLAMGLVSFTVLTTWRRGRRMVSEEMAKQSIPMSDFLQSIDDVHRIYGTAIFMTSAKDGVPPALLHNLKHNQVLHERVVLVTVQTTDTPTVNDMERIYLHRMQKGFMRLIVRYGFMESPDIPGALELCKGHGERFDMMETTFYLSRETIVPSMARGMLPWRARLFAVMSKNATSASDFFHIPTNRVVELGTQLVI.

Helical transmembrane passes span 12–32, 52–72, 101–121, 138–158, 166–186, 213–233, 249–269, 286–306, 338–358, 370–390, 396–416, and 420–440; these read ITVA…LYAL, VLSL…VAII, WIIT…SMIT, PDLK…LFFI, VGKL…ILGL, GLAF…EALY, FGFV…LLLI, ALIP…QAVI, IYVP…VIGF, IAVT…MVLM, LLVA…FAAN, and IPEG…VLTT.

This sequence belongs to the HAK/KUP transporter (TC 2.A.72) family.

The protein localises to the cell inner membrane. It catalyses the reaction K(+)(in) + H(+)(in) = K(+)(out) + H(+)(out). Functionally, transport of potassium into the cell. Likely operates as a K(+):H(+) symporter. This is Probable potassium transport system protein Kup 2 from Dechloromonas aromatica (strain RCB).